Reading from the N-terminus, the 58-residue chain is Photosystem II reaction center X protein (58 aa).

The helical transmembrane segment at 27–47 threads the bilayer; it reads IGSFLAAAAFIVVPAASFLIW.

The protein belongs to the PsbX family. Type 2 subfamily. As to quaternary structure, PSII consists of a core antenna complex that captures photons, and an electron transfer chain that converts photonic excitation into a charge separation. PSII forms dimeric complexes.

The protein resides in the cellular thylakoid membrane. In terms of biological role, involved in the binding and/or turnover of quinones at the Q(B) site of Photosystem II. The sequence is that of Photosystem II reaction center X protein from Prochlorococcus marinus (strain MIT 9211).